Here is a 1034-residue protein sequence, read N- to C-terminus: AP-3 complex subunit delta (1034 aa).

HEAT repeat units follow at residues Lys-35–Asp-72, Asp-143–Glu-180, Ala-181–Lys-217, Tyr-219–Arg-255, Lys-258–Asn-297, Ser-299–Lys-337, Ser-338–Leu-374, Glu-376–Thr-414, Asn-415–Val-452, and Asn-570–Gln-609. Disordered stretches follow at residues Asp-637–Lys-660, Gln-669–Pro-688, Glu-701–Gln-723, and Gln-758–Leu-1034. Ser-683 carries the post-translational modification Phosphoserine. A Phosphothreonine modification is found at Thr-687. The span at Gly-769 to Asn-784 shows a compositional bias: basic residues. Basic and acidic residues-rich tracts occupy residues Lys-822–Asp-836 and Lys-882–Ala-906. A compositionally biased stretch (low complexity) spans Ser-928–Asp-942. Over residues Lys-986–Lys-1003 the composition is skewed to basic residues. Low complexity predominate over residues Glu-1007–Ser-1016. Positions Gly-1025 to Leu-1034 are enriched in polar residues.

The protein belongs to the adaptor complexes large subunit family. Adaptor protein complex 3 (AP-3) is a heterotetramer composed of two large chains (delta and beta3), a medium chain (mu3) and a small chain (sigma3).

The protein resides in the cytoplasmic vesicle. It is found in the clathrin-coated vesicle membrane. It localises to the golgi apparatus. Functionally, part of the AP-3 complex, an adapter-related complex which is not clathrin-associated. The complex is associated with the Golgi region as well as more peripheral structures. It facilitates the budding of vesicles from the Golgi membrane and may be directly involved in trafficking to lysosomes. May be a coat protein involved in the formation of specialized structures like pigment granules. This Drosophila melanogaster (Fruit fly) protein is AP-3 complex subunit delta (g).